The chain runs to 295 residues: Nitrogenase iron protein (295 aa).

11 to 18 (GKGGIGKS) contributes to the ATP binding site. [4Fe-4S] cluster is bound at residue cysteine 99. Arginine 102 carries the post-translational modification ADP-ribosylarginine; by dinitrogenase reductase ADP-ribosyltransferase. [4Fe-4S] cluster is bound at residue cysteine 133.

Belongs to the NifH/BchL/ChlL family. Homodimer. The cofactor is [4Fe-4S] cluster. In terms of processing, the reversible ADP-ribosylation of Arg-102 inactivates the nitrogenase reductase and regulates nitrogenase activity.

It catalyses the reaction N2 + 8 reduced [2Fe-2S]-[ferredoxin] + 16 ATP + 16 H2O = H2 + 8 oxidized [2Fe-2S]-[ferredoxin] + 2 NH4(+) + 16 ADP + 16 phosphate + 6 H(+). In terms of biological role, the key enzymatic reactions in nitrogen fixation are catalyzed by the nitrogenase complex, which has 2 components: the iron protein and the molybdenum-iron protein. The protein is Nitrogenase iron protein of Zymomonas mobilis subsp. mobilis (strain ATCC 31821 / ZM4 / CP4).